Consider the following 522-residue polypeptide: MELRADLRSILQYLPLVAQSSSLVWPPSVEEELQTISRGPSESMVNSGEALALHITNMRKSLSLNASDLAPYALQGYGLFFDKKISREESANFFGEVVPALCRLLLQLPSMLEKHYQKADHVLDGVKSGLRLLGPQEAGIVLLSQELIAALLACSFFCLFPEVDRSLKNLQGINFSGLFSFPYMRHCTKQENKIKCLIHYFGRICRWMPTGFVSFERKILPLEYHPHFVSYPKADSWANSVTPLCSIEIHTSGAIEDQPCEALEVDFADEYFGGLTLSYDTLQEEIRFVINPELIAGMIFLPRMDANEAIEIVGVERFSGYTGYGPSFQYAGDYTDNKDLDIFRRRKTRVIAIDAMPDPGMGQYKLDALIREVNKAFSGYMHQCKYNIDVKHDPEASSSHVPLTSDSASQVIESSHRWCIDHEEKKIGVATGNWGCGVFGGDPELKIMLQWLAISQSGRPFMSYYTFGLQALQNLNQVIEMVALQEMTVGDLWKKLVEYSSERLSRRTWLGFFSWLMTSLST.

It belongs to the poly(ADP-ribose) glycohydrolase family.

It carries out the reaction [(1''-&gt;2')-ADP-alpha-D-ribose](n) + H2O = [(1''-&gt;2')-ADP-alpha-D-ribose](n-1) + ADP-D-ribose. Functionally, poly(ADP-ribose) synthesized after DNA damage is only present transiently and is rapidly degraded by poly(ADP-ribose) glycohydrolase. In Arabidopsis thaliana (Mouse-ear cress), this protein is Probable poly(ADP-ribose) glycohydrolase 2 (PARG2).